Consider the following 184-residue polypeptide: ATP synthase subunit b, chloroplastic (184 aa).

Residues Ile-26–Val-48 traverse the membrane as a helical segment.

This sequence belongs to the ATPase B chain family. F-type ATPases have 2 components, F(1) - the catalytic core - and F(0) - the membrane proton channel. F(1) has five subunits: alpha(3), beta(3), gamma(1), delta(1), epsilon(1). F(0) has four main subunits: a(1), b(1), b'(1) and c(10-14). The alpha and beta chains form an alternating ring which encloses part of the gamma chain. F(1) is attached to F(0) by a central stalk formed by the gamma and epsilon chains, while a peripheral stalk is formed by the delta, b and b' chains.

It localises to the plastid. The protein resides in the chloroplast thylakoid membrane. F(1)F(0) ATP synthase produces ATP from ADP in the presence of a proton or sodium gradient. F-type ATPases consist of two structural domains, F(1) containing the extramembraneous catalytic core and F(0) containing the membrane proton channel, linked together by a central stalk and a peripheral stalk. During catalysis, ATP synthesis in the catalytic domain of F(1) is coupled via a rotary mechanism of the central stalk subunits to proton translocation. Functionally, component of the F(0) channel, it forms part of the peripheral stalk, linking F(1) to F(0). The polypeptide is ATP synthase subunit b, chloroplastic (Calycanthus floridus var. glaucus (Eastern sweetshrub)).